We begin with the raw amino-acid sequence, 803 residues long: Phenylalanine--tRNA ligase beta subunit (803 aa).

Residues 39–150 (AKVLAPFTIA…ADAPVGAAYA (112 aa)) form the tRNA-binding domain. The 76-residue stretch at 400–475 (ADDKIIDFPL…RIVGVDKVPL (76 aa)) folds into the B5 domain. Mg(2+)-binding residues include aspartate 453, aspartate 459, glutamate 462, and glutamate 463. The FDX-ACB domain maps to 709–802 (SAFHPVSRDF…VTKKTGGSLR (94 aa)).

Belongs to the phenylalanyl-tRNA synthetase beta subunit family. Type 1 subfamily. In terms of assembly, tetramer of two alpha and two beta subunits. Requires Mg(2+) as cofactor.

It localises to the cytoplasm. The enzyme catalyses tRNA(Phe) + L-phenylalanine + ATP = L-phenylalanyl-tRNA(Phe) + AMP + diphosphate + H(+). The protein is Phenylalanine--tRNA ligase beta subunit of Rhodopseudomonas palustris (strain ATCC BAA-98 / CGA009).